The sequence spans 427 residues: 5'-deoxyadenosine deaminase (427 aa).

Residues His62 and His64 each contribute to the Zn(2+) site. Substrate-binding residues include Glu91 and His183. His210 provides a ligand contact to Zn(2+). Glu213 and Asp298 together coordinate substrate. Zn(2+) is bound at residue Asp298.

This sequence belongs to the metallo-dependent hydrolases superfamily. MTA/SAH deaminase family. As to quaternary structure, homotetramer. Zn(2+) serves as cofactor.

The catalysed reaction is 5'-deoxyadenosine + H2O + H(+) = 5'-deoxyinosine + NH4(+). It carries out the reaction S-adenosyl-L-homocysteine + H2O + H(+) = S-inosyl-L-homocysteine + NH4(+). The enzyme catalyses S-methyl-5'-thioadenosine + H2O + H(+) = S-methyl-5'-thioinosine + NH4(+). It catalyses the reaction adenosine + H2O + H(+) = inosine + NH4(+). It participates in amino-acid biosynthesis; S-adenosyl-L-methionine biosynthesis. Functionally, catalyzes the deamination of three SAM-derived enzymatic products, namely 5'-deoxyadenosine, S-adenosyl-L-homocysteine, and 5'-methylthioadenosine, to produce the inosine analogs. Can also deaminate adenosine. The preferred substrate for this enzyme is 5'-deoxyadenosine, but all these substrates are efficiently deaminated. Likely functions in a S-adenosyl-L-methionine (SAM) recycling pathway from S-adenosyl-L-homocysteine (SAH) produced from SAM-dependent methylation reactions. May also be involved in the recycling of 5'-deoxyadenosine, whereupon the 5'-deoxyribose moiety of 5'-deoxyinosine is further metabolized to deoxyhexoses used for the biosynthesis of aromatic amino acids in methanogens. This chain is 5'-deoxyadenosine deaminase, found in Methanothermobacter thermautotrophicus (strain ATCC 29096 / DSM 1053 / JCM 10044 / NBRC 100330 / Delta H) (Methanobacterium thermoautotrophicum).